We begin with the raw amino-acid sequence, 599 residues long: Fructan 1-exohydrolase (599 aa).

Positions 1-16 (MAQAWAFLLLPALALA) are cleaved as a signal peptide. The active site involves aspartate 78. N-linked (GlcNAc...) asparagine glycosylation is found at asparagine 171, asparagine 239, and asparagine 251. A disulfide bond links cysteine 449 and cysteine 495.

The protein belongs to the glycosyl hydrolase 32 family.

The catalysed reaction is Hydrolysis of terminal, non-reducing (2-&gt;1)-linked beta-D-fructofuranose residues in fructans.. With respect to regulation, inhibited by sucrose. In terms of biological role, hydrolyzes inulin-type beta-(2,1)-fructans. May play a role as a beta-(2,1)-trimmer during graminan biosynthesis. The polypeptide is Fructan 1-exohydrolase (Hordeum vulgare (Barley)).